Here is a 184-residue protein sequence, read N- to C-terminus: ATP synthase subunit b (184 aa).

The helical transmembrane segment at 4–24 (LSVLFALVASPALAASGPFFS) threads the bilayer.

Belongs to the ATPase B chain family. As to quaternary structure, F-type ATPases have 2 components, F(1) - the catalytic core - and F(0) - the membrane proton channel. F(1) has five subunits: alpha(3), beta(3), gamma(1), delta(1), epsilon(1). F(0) has three main subunits: a(1), b(2) and c(10-14). The alpha and beta chains form an alternating ring which encloses part of the gamma chain. F(1) is attached to F(0) by a central stalk formed by the gamma and epsilon chains, while a peripheral stalk is formed by the delta and b chains.

It is found in the cell inner membrane. Its function is as follows. F(1)F(0) ATP synthase produces ATP from ADP in the presence of a proton or sodium gradient. F-type ATPases consist of two structural domains, F(1) containing the extramembraneous catalytic core and F(0) containing the membrane proton channel, linked together by a central stalk and a peripheral stalk. During catalysis, ATP synthesis in the catalytic domain of F(1) is coupled via a rotary mechanism of the central stalk subunits to proton translocation. In terms of biological role, component of the F(0) channel, it forms part of the peripheral stalk, linking F(1) to F(0). The polypeptide is ATP synthase subunit b (Paracoccus denitrificans (strain Pd 1222)).